Here is a 163-residue protein sequence, read N- to C-terminus: LHHSKHHATYVKGANDAVAKLEEARAKEDHSAILLNEKNLAFNLAGHVNHTIWWKNLSPNGGDKPTGELAAAIDEAFGSFDKFRAQFHAAATTVQGSGWAALGWDTLGNKLLIFQVYDHQTNFPLGIIPLLLLDMWEHAFYLQYKNVKVDFAKAFWNVVNWDD.

Mn(2+) is bound by residues His-2, His-50, Asp-134, and His-138.

It belongs to the iron/manganese superoxide dismutase family. Mn(2+) is required as a cofactor.

The catalysed reaction is 2 superoxide + 2 H(+) = H2O2 + O2. Functionally, destroys superoxide anion radicals which are normally produced within the cells and which are toxic to biological systems. In Mycobacterium kansasii, this protein is Superoxide dismutase [Mn] (sodA).